A 394-amino-acid polypeptide reads, in one-letter code: Actin-related protein 2 (394 aa).

ATP-binding positions include 160-162 (GDG), 214-218 (RMIKE), and 305-310 (GGSTMY).

It belongs to the actin family. ARP2 subfamily. Component of the Arp2/3 complex composed of ACTR2/ARP2, ACTR3/ARP3, ARPC1B/p41-ARC, ARPC2/p34-ARC, ARPC3/p21-ARC, ARPC4/p20-ARC and ARPC5/p16-ARC.

The protein localises to the cytoplasm. The protein resides in the cytoskeleton. It localises to the cell projection. It is found in the nucleus. Functionally, ATP-binding component of the Arp2/3 complex, a multiprotein complex that mediates actin polymerization upon stimulation by nucleation-promoting factor (NPF). The Arp2/3 complex mediates the formation of branched actin networks in the cytoplasm, providing the force for cell motility. Seems to contact the pointed end of the daughter actin filament. In addition to its role in the cytoplasmic cytoskeleton, the Arp2/3 complex also promotes actin polymerization in the nucleus, thereby regulating gene transcription and repair of damaged DNA. The Arp2/3 complex promotes homologous recombination (HR) repair in response to DNA damage by promoting nuclear actin polymerization, leading to drive motility of double-strand breaks (DSBs). This Gallus gallus (Chicken) protein is Actin-related protein 2 (ACTR2).